Reading from the N-terminus, the 471-residue chain is MASKSQHNASKAKNHNVKAESQGQWGRAWEVDWFSLVSVIFLLLFAPFIVYYFIMACDQYSCSLTAPILDVATGRASLADIWAKTPPVTAKAAQLYALWVSFQVLLYSWLPDFCHRFLPGYVGGVQEGAITPAGIVNKYEVNGLQAWLITHFLWFVNAYLLSWFSPTIIFDNWIPLLWCANILGYAVSTFAMIKGYLFPTSAEDCKFTGNFFYNYMMGIEFNPRIGKWFDFKLFFNGRPGIVAWTLINLSFAAKQQELYGHVTNSMILVNVLQAIYVLDFFWNETWYLKTIDICHDHFGWYLGWGDCVWLPYLYTLQGLYLVYHPVQLSTPNALGVLLLGLVGYYIFRMTNHQKDLFRRTDGHCLIWGKKPKAIECSYTSADGLKHRSKLLVSGFWGVARHFNYTGDLMGSLAYCLACGGGHLLPYFYIIYMTILLTHRCLRDEHRCANKYGRDWERYVAAVPYRLLPGIF.

The next 8 helical transmembrane spans lie at 36–56, 95–115, 144–164, 173–193, 233–253, 262–282, 302–322, and 327–347; these read LVSV…FIMA, LYAL…DFCH, LQAW…LSWF, WIPL…FAMI, LFFN…SFAA, VTNS…DFFW, LGWG…LYLV, and QLST…YYIF. NADP(+) contacts are provided by residues Lys354, Arg358, Leu391, Trp396, and 403 to 404; that span reads NY. The chain crosses the membrane as a helical span at residues 416 to 436; sequence LACGGGHLLPYFYIIYMTILL. NADP(+)-binding positions include Asp443, 447-451, and Tyr458; that span reads CANKY.

The protein belongs to the ERG4/ERG24 family. As to quaternary structure, interacts with DHCR24; this interaction regulates DHCR7 activity. Interacts with TMEM147. As to expression, highest expression is detected in liver, followed by kidney and brain.

It localises to the endoplasmic reticulum membrane. The enzyme catalyses cholesterol + NADP(+) = 7-dehydrocholesterol + NADPH + H(+). It carries out the reaction 7-dehydrodesmosterol + NADPH + H(+) = desmosterol + NADP(+). It catalyses the reaction 5,6alpha-epoxy-5alpha-cholestan-3beta-ol + H2O = 5alpha-cholestane-3beta,5,6beta-triol. The catalysed reaction is 5,6beta-epoxy-5beta-cholestan-3beta-ol + H2O = 5alpha-cholestane-3beta,5,6beta-triol. It functions in the pathway steroid biosynthesis; cholesterol biosynthesis. Functionally, oxidoreductase that catalyzes the last step of the cholesterol synthesis pathway, which transforms cholesta-5,7-dien-3beta-ol (7-dehydrocholesterol,7-DHC) into cholesterol by reducing the C7-C8 double bond of its sterol core. Can also metabolize cholesta-5,7,24-trien-3beta-ol (7-dehydrodemosterol, 7-DHD) to desmosterol, which is then metabolized by the Delta(24)-sterol reductase (DHCR24) to cholesterol. Modulates ferroptosis (a form of regulated cell death driven by iron-dependent lipid peroxidation) through the metabolic breakdown of the anti-ferroptotic metabolites 7-DHC and 7-DHD which, when accumulated, divert the propagation of peroxyl radical-mediated damage from phospholipid components to its sterol core, protecting plasma and mitochondrial membranes from phospholipid autoxidation. Its function is as follows. Component of the microsomal antiestrogen binding site (AEBS), a multiproteic complex at the ER membrane that consists of an association between cholestenol Delta-isomerase/EBP and DHCR7. This complex is responsible for cholesterol-5,6-epoxide hydrolase (ChEH) activity, which consists in the hydration of cholesterol-5,6-epoxides (5,6-EC) into cholestane-3beta,5alpha,6beta-triol (CT). The precise role of each component of this complex has not been described yet. The sequence is that of 7-dehydrocholesterol reductase (Dhcr7) from Rattus norvegicus (Rat).